Consider the following 653-residue polypeptide: MKLFDEIPAERPATPLLDTCEHPAALHDFNATQLRQLADELRAYLLYSVGCTGGHFGAGLGVVELTVALHHILDTPYDRLVWDVGHQAYPHKILTGRREQMSTIRQFGGLAAFPKRDESPYDTFGVGHSSTSISAALGMALAARTKGERRRVCAVIGDGALSAGMAFEALAHAGHVDANMLVILNDNEMSISENVGGMASYLARILVSKPYTVMRENSKRVLSHLPGALELARRTEEHVKGMVSPATLFEEMGFNYIGPIDGHDLPTLVQTLGNMANLEGPQFLHIKTCKGRGFRPAEADPIGYHAITKLEKTTSEPPPKKEPRSPNAATAEPEAQPKPQPKPRKYCNVFGEWICDMAAVDARLIGITPAMREGSDLIRFSREYPERYYDVAIAEQHAVTLAAGMACEAMKPVVAIYSTFLQRGYDQLIHDVAVQALDVTFAIDRAGVVGEDGPTHHGALDLSFLRCIPGMIVLAPADEAECRAMLSAAYHHPGPAAVRYPRGTGPGTQVASNLEALPIGEAETRRSGREGGVALLAFGSMNGPAGEVAERLDATHLNMRSVKPLDREAILAAARDHRLLVTLEESVVAGGAGSGVNELLAAEGVQVEVLNLGLPDDFVEHGKPAELLAACGLDAEGIETAVRRRLETSRADD.

Thiamine diphosphate is bound by residues His-86 and 127-129 (GHS). Asp-158 is a Mg(2+) binding site. Residues 159 to 160 (GA), Asn-187, and Phe-294 contribute to the thiamine diphosphate site. A Mg(2+)-binding site is contributed by Asn-187. The segment covering 309–324 (KLEKTTSEPPPKKEPR) has biased composition (basic and acidic residues). Residues 309 to 343 (KLEKTTSEPPPKKEPRSPNAATAEPEAQPKPQPKP) form a disordered region. Glu-395 serves as a coordination point for thiamine diphosphate.

It belongs to the transketolase family. DXPS subfamily. In terms of assembly, homodimer. Mg(2+) is required as a cofactor. The cofactor is thiamine diphosphate.

The enzyme catalyses D-glyceraldehyde 3-phosphate + pyruvate + H(+) = 1-deoxy-D-xylulose 5-phosphate + CO2. Its pathway is metabolic intermediate biosynthesis; 1-deoxy-D-xylulose 5-phosphate biosynthesis; 1-deoxy-D-xylulose 5-phosphate from D-glyceraldehyde 3-phosphate and pyruvate: step 1/1. Its function is as follows. Catalyzes the acyloin condensation reaction between C atoms 2 and 3 of pyruvate and glyceraldehyde 3-phosphate to yield 1-deoxy-D-xylulose-5-phosphate (DXP). In Chromohalobacter salexigens (strain ATCC BAA-138 / DSM 3043 / CIP 106854 / NCIMB 13768 / 1H11), this protein is 1-deoxy-D-xylulose-5-phosphate synthase.